The chain runs to 182 residues: Heat shock protein beta-2 (182 aa).

The sHSP domain maps to 55–163 (RAGEGARAGA…DTEVNEVYIS (109 aa)).

Belongs to the small heat shock protein (HSP20) family. As to quaternary structure, interacts with DMPK; may enhance its kinase activity.

The protein localises to the cytoplasm. It localises to the nucleus. May regulate the kinase DMPK. The protein is Heat shock protein beta-2 (Hspb2) of Mus musculus (Mouse).